The chain runs to 499 residues: Glycerol kinase (499 aa).

Position 13 (Thr-13) interacts with ADP. Residues Thr-13, Thr-14, and Ser-15 each coordinate ATP. Thr-13 serves as a coordination point for sn-glycerol 3-phosphate. Arg-17 lines the ADP pocket. Residues Arg-83, Glu-84, Tyr-135, and Asp-245 each coordinate sn-glycerol 3-phosphate. Glycerol is bound by residues Arg-83, Glu-84, Tyr-135, Asp-245, and Gln-246. Residues Thr-267 and Gly-310 each coordinate ADP. Thr-267, Gly-310, Gln-314, and Gly-411 together coordinate ATP. ADP-binding residues include Gly-411 and Asn-415.

The protein belongs to the FGGY kinase family.

The enzyme catalyses glycerol + ATP = sn-glycerol 3-phosphate + ADP + H(+). It functions in the pathway polyol metabolism; glycerol degradation via glycerol kinase pathway; sn-glycerol 3-phosphate from glycerol: step 1/1. Inhibited by fructose 1,6-bisphosphate (FBP). Its function is as follows. Key enzyme in the regulation of glycerol uptake and metabolism. Catalyzes the phosphorylation of glycerol to yield sn-glycerol 3-phosphate. The polypeptide is Glycerol kinase (Xanthomonas euvesicatoria pv. vesicatoria (strain 85-10) (Xanthomonas campestris pv. vesicatoria)).